Here is a 342-residue protein sequence, read N- to C-terminus: Flotillin-like protein FloA (342 aa).

The next 2 membrane-spanning stretches (helical) occupy residues 18–38 and 39–59; these read FFIFVLAIVLLIILSVIGKFI and SLWFQAFVSGTPIPLFNIIGM.

This sequence belongs to the flotillin-like FloA family. Homooligomerizes.

The protein localises to the cell membrane. It localises to the membrane raft. Its function is as follows. Found in functional membrane microdomains (FMM) that may be equivalent to eukaryotic membrane rafts. FMMs are highly dynamic and increase in number as cells age. Flotillins are thought to be important factors in membrane fluidity. The protein is Flotillin-like protein FloA of Protochlamydia amoebophila (strain UWE25).